The chain runs to 3430 residues: Genome polyprotein (3430 aa).

The tract at residues 2–15 (SKKPGGPGKNRAVN) is interaction with host EXOC1. Residues 2 to 105 (SKKPGGPGKN…NRRSTKQKKR (104 aa)) are Cytoplasmic-facing. Positions 37 to 72 (LIDGKGPIRFVLALLAFFRFTAIAPTRAVLDRWRGV) are hydrophobic; homodimerization of capsid protein C. A propeptide spans 106-123 (GGTAGFTILLGLIACAGA) (ER anchor for the capsid protein C, removed in mature form by serine protease NS3). Residues 106 to 126 (GGTAGFTILLGLIACAGAVTL) form a helical membrane-spanning segment. The Extracellular segment spans residues 127–248 (SNFQGKVMMT…KATRYLVKTE (122 aa)). Asparagine 138 carries N-linked (GlcNAc...) asparagine; by host glycosylation. Residues 249–269 (SWILRNPGYALVAAVIGWMLG) form a helical membrane-spanning segment. The Cytoplasmic segment spans residues 270 to 275 (SNTMQR). A helical membrane pass occupies residues 276–290 (VVFAILLLLVAPAYS). At 291 to 739 (FNCLGMSNRD…QVFGGAFRSL (449 aa)) the chain is on the extracellular side. Disulfide bonds link cysteine 293-cysteine 320, cysteine 350-cysteine 406, cysteine 364-cysteine 395, cysteine 382-cysteine 411, cysteine 476-cysteine 574, and cysteine 591-cysteine 622. Residues 388–401 (DRGWGNGCGLFGKG) form a fusion peptide region. Residues 740–760 (FGGMSWITQGLLGALLLWMGI) form a helical membrane-spanning segment. Residues 761–766 (NARDRS) are Cytoplasmic-facing. The chain crosses the membrane as a helical span at residues 767 to 787 (IAMTFLAVGGVLLFLSVNVHA). At 788–1212 (DTGCAIDIGR…AFAEANSGGD (425 aa)) the chain is on the extracellular side. 2 disulfides stabilise this stretch: cysteine 791/cysteine 802 and cysteine 842/cysteine 930. N-linked (GlcNAc...) asparagine; by host glycosylation is found at asparagine 917, asparagine 962, and asparagine 994. 4 disulfides stabilise this stretch: cysteine 966–cysteine 1010, cysteine 1067–cysteine 1116, cysteine 1078–cysteine 1099, and cysteine 1100–cysteine 1103. The helical transmembrane segment at 1213 to 1233 (VVHLALMATFKIQPVFLVASF) threads the bilayer. Residues 1234-1243 (LKARWTNQES) are Cytoplasmic-facing. The chain crosses the membrane as a helical span at residues 1244-1264 (ILLMLAAAFFQMAYYDAKNVL). Over 1265-1278 (SWEVPDVLNSLSVA) the chain is Lumenal. A helical transmembrane segment spans residues 1279-1299 (WMILRAISFTNTSNVVVPLLA). Residues 1300–1307 (LLTPGLKC) lie on the Cytoplasmic side of the membrane. The chain crosses the membrane as a helical span at residues 1308 to 1328 (LNLDVYRILLLMVGVGSLIKE). At 1329–1340 (KRSSAAKKKGAC) the chain is on the lumenal side. Residues 1341–1361 (LICLALASTGVFNPMILAAGL) traverse the membrane as a helical segment. Over 1362–1371 (MACDPNRKRG) the chain is Cytoplasmic. A helical membrane pass occupies residues 1372-1392 (WPATEVMTAVGLMFAIVGGLA). Topologically, residues 1393–1395 (ELD) are lumenal. A helical membrane pass occupies residues 1396-1416 (IDSMAIPMTIAGLMFAAFVIS). Topologically, residues 1417 to 1473 (GKSTDMWIERTADITWESDAEITGSSERVDVRLDDDGNFQLMNDPGAPWKIWMLRMA) are cytoplasmic. The segment at 1424-1463 (IERTADITWESDAEITGSSERVDVRLDDDGNFQLMNDPGA) is interacts with and activates NS3 protease. Positions 1474-1494 (CLAISAYTPWAILPSVIGFWI) form an intramembrane region, helical. Topologically, residues 1495–2170 (TLQYTKRGGV…RMALEELPDA (676 aa)) are cytoplasmic. In terms of domain architecture, Peptidase S7 spans 1502-1679 (GGVLWDTPSP…ERMEEPAPAG (178 aa)). Residues histidine 1552, aspartate 1576, and serine 1636 each act as charge relay system; for serine protease NS3 activity in the active site. A Helicase ATP-binding domain is found at 1682-1838 (PEMLRKKQIT…ESNAPISDMQ (157 aa)). An important for RNA-binding region spans residues 1686–1689 (RKKQ). Residue 1695-1702 (LHPGAGKT) participates in ATP binding. The DEAH box signature appears at 1786 to 1789 (DEAH). Positions 1849–2014 (GYEWITEYVG…GLVAQLYQPE (166 aa)) constitute a Helicase C-terminal domain. The residue at position 1890 (lysine 1890) is an N6-acetyllysine; by host. Positions 2165–2169 (EELPD) are regulates the ATPase activity of NS3 helicase. The helical transmembrane segment at 2171–2191 (LQTIVLIALLSVMSLGVFFLL) threads the bilayer. At 2192-2196 (MQRKG) the chain is on the lumenal side. The helical intramembrane region spans 2197 to 2217 (IGKIGLGGVILGAATFFCWMA). A topological domain (lumenal) is located at residue glutamate 2218. Residues 2219–2239 (VPGTKIAGMLLLSLLLMIVLI) form a helical membrane-spanning segment. Residues 2240-2254 (PEPEKQRSQTDNQLA) lie on the Cytoplasmic side of the membrane. Residues 2255–2275 (VFLICVLTLVGAVAANEMGWL) traverse the membrane as a helical segment. Over 2276-2309 (DKTKNDIGSLLGHRPEARETTLGVESFLLDLRPA) the chain is Lumenal. Positions 2310–2330 (TAWSLYAVTTAVLTPLLKHLI) form an intramembrane region, helical. The Lumenal segment spans residues 2331–2377 (TSDYINTSLTSINVQASALFTLARGFPFVDVGVSALLLAVGCWGQVT). Residues 2378-2398 (LTVTVTAAALLFCHYAYMVPG) traverse the membrane as a helical segment. Residues 2399 to 2441 (WQAEAMRSAQRRTAAGIMKNVVVDGIVATDVPELERTTPVMQK) lie on the Cytoplasmic side of the membrane. A helical membrane pass occupies residues 2442-2462 (KVGQIILILVSMAAVVVNPSV). At 2463-2467 (RTVRE) the chain is on the lumenal side. The helical transmembrane segment at 2468 to 2488 (AGILTTAAAVTLWENGASSVW) threads the bilayer. Topologically, residues 2489–3430 (NATTAIGLCH…DTIVVEDTVL (942 aa)) are cytoplasmic. Residues 2526 to 2791 (GGAKGRTLGE…DVNLGSGTRA (266 aa)) enclose the mRNA cap 0-1 NS5-type MT domain. Residue serine 2581 coordinates S-adenosyl-L-methionine. A Phosphoserine modification is found at serine 2581. Residue lysine 2586 is the For 2'-O-MTase activity of the active site. Residues glycine 2611, tryptophan 2612, threonine 2629, lysine 2630, aspartate 2656, and valine 2657 each contribute to the S-adenosyl-L-methionine site. Aspartate 2671 serves as the catalytic For 2'-O-MTase activity. Residue isoleucine 2672 participates in S-adenosyl-L-methionine binding. Residues lysine 2707 and glutamate 2743 each act as for 2'-O-MTase activity in the active site. Tyrosine 2745 contributes to the S-adenosyl-L-methionine binding site. The Nuclear localization signal motif lies at 2914 to 2916 (RDK). Residues glutamate 2965, histidine 2969, cysteine 2974, and cysteine 2977 each coordinate Zn(2+). The RdRp catalytic domain maps to 3055–3207 (GKVYADDTAG…KPLDDRFATS (153 aa)). 3 residues coordinate Zn(2+): histidine 3242, cysteine 3258, and cysteine 3377. Positions 3428–3430 (TVL) match the PDZ-binding motif.

In the N-terminal section; belongs to the class I-like SAM-binding methyltransferase superfamily. mRNA cap 0-1 NS5-type methyltransferase family. In terms of assembly, homodimer. Interacts (via N-terminus) with host EXOC1 (via C-terminus); this interaction results in EXOC1 degradation through the proteasome degradation pathway. Interacts with host DDX56; this interaction plays an important role in genomic RNA encapsidation. Forms heterodimers with envelope protein E in the endoplasmic reticulum and Golgi. As to quaternary structure, homodimer; in the endoplasmic reticulum and Golgi. In terms of assembly, homodimer; Homohexamer when secreted. Interacts with envelope protein E. NS1 interacts with NS4B. Interacts with host complement protein CFH; this interaction leads to the degradation of C3. Interacts (via N-terminus) with serine protease NS3. As to quaternary structure, forms a heterodimer with serine protease NS3. May form homooligomers. In terms of assembly, forms a heterodimer with NS2B. Interacts with NS4B. Interacts with unphosphorylated RNA-directed RNA polymerase NS5; this interaction stimulates RNA-directed RNA polymerase NS5 guanylyltransferase activity. Interacts with Serine protease/Helicase NS3. Interacts with NS1. As to quaternary structure, homodimer. Interacts with host STAT2; this interaction inhibits the phosphorylation of the latter, and, when all viral proteins are present (polyprotein), targets STAT2 for degradation. Interacts with host PAF1 complex. Specific enzymatic cleavages in vivo yield mature proteins. Cleavages in the lumen of endoplasmic reticulum are performed by host signal peptidase, whereas cleavages in the cytoplasmic side are performed by serine protease NS3. Signal cleavage at the 2K-4B site requires a prior NS3 protease-mediated cleavage at the 4A-2K site. In terms of processing, cleaved in post-Golgi vesicles by a host furin, releasing the mature small envelope protein M, and peptide pr. This cleavage is incomplete as up to 30% of viral particles still carry uncleaved prM. Post-translationally, not N-glycosylated. N-glycosylated. The excreted form is glycosylated and this is required for efficient secretion of the protein from infected cells. In terms of processing, acetylated by host KAT5. Acetylation modulates NS3 RNA-binding and unwinding activities and plays an important positive role for viral replication. Post-translationally, phosphorylated on serines residues. This phosphorylation may trigger NS5 nuclear localization.

It is found in the virion. Its subcellular location is the host nucleus. The protein resides in the host cytoplasm. It localises to the host perinuclear region. The protein localises to the secreted. It is found in the virion membrane. Its subcellular location is the host endoplasmic reticulum membrane. The catalysed reaction is Selective hydrolysis of -Xaa-Xaa-|-Yaa- bonds in which each of the Xaa can be either Arg or Lys and Yaa can be either Ser or Ala.. The enzyme catalyses RNA(n) + a ribonucleoside 5'-triphosphate = RNA(n+1) + diphosphate. It carries out the reaction a ribonucleoside 5'-triphosphate + H2O = a ribonucleoside 5'-diphosphate + phosphate + H(+). It catalyses the reaction ATP + H2O = ADP + phosphate + H(+). The catalysed reaction is a 5'-end (5'-triphosphoguanosine)-ribonucleoside in mRNA + S-adenosyl-L-methionine = a 5'-end (N(7)-methyl 5'-triphosphoguanosine)-ribonucleoside in mRNA + S-adenosyl-L-homocysteine. The enzyme catalyses a 5'-end (N(7)-methyl 5'-triphosphoguanosine)-ribonucleoside in mRNA + S-adenosyl-L-methionine = a 5'-end (N(7)-methyl 5'-triphosphoguanosine)-(2'-O-methyl-ribonucleoside) in mRNA + S-adenosyl-L-homocysteine + H(+). Functionally, plays a role in virus budding by binding to the cell membrane and gathering the viral RNA into a nucleocapsid that forms the core of a mature virus particle. During virus entry, may induce genome penetration into the host cytoplasm after hemifusion induced by the surface proteins. Can migrate to the cell nucleus where it modulates host functions. Overcomes the anti-viral effects of host EXOC1 by sequestering and degrading the latter through the proteasome degradation pathway. Inhibits RNA silencing by interfering with host Dicer. Its function is as follows. Prevents premature fusion activity of envelope proteins in trans-Golgi by binding to envelope protein E at pH6.0. After virion release in extracellular space, gets dissociated from E dimers. In terms of biological role, acts as a chaperone for envelope protein E during intracellular virion assembly by masking and inactivating envelope protein E fusion peptide. prM is the only viral peptide matured by host furin in the trans-Golgi network probably to avoid catastrophic activation of the viral fusion activity in acidic Golgi compartment prior to virion release. prM-E cleavage is inefficient, and many virions are only partially matured. These uncleaved prM would play a role in immune evasion. Functionally, may play a role in virus budding. Exerts cytotoxic effects by activating a mitochondrial apoptotic pathway through M ectodomain. May display a viroporin activity. Binds to host cell surface receptor and mediates fusion between viral and cellular membranes. Envelope protein is synthesized in the endoplasmic reticulum in the form of heterodimer with protein prM. They play a role in virion budding in the ER, and the newly formed immature particle is covered with 60 spikes composed of heterodimer between precursor prM and envelope protein E. The virion is transported to the Golgi apparatus where the low pH causes dissociation of PrM-E heterodimers and formation of E homodimers. prM-E cleavage is inefficient, and many virions are only partially matured. These uncleaved prM would play a role in immune evasion. Its function is as follows. Involved in immune evasion, pathogenesis and viral replication. Once cleaved off the polyprotein, is targeted to three destinations: the viral replication cycle, the plasma membrane and the extracellular compartment. Essential for viral replication. Required for formation of the replication complex and recruitment of other non-structural proteins to the ER-derived membrane structures. Excreted as a hexameric lipoparticle that plays a role against host immune response. Antagonizing the complement function. Binds to the host macrophages and dendritic cells. Inhibits signal transduction originating from Toll-like receptor 3 (TLR3). In terms of biological role, component of the viral RNA replication complex that functions in virion assembly and antagonizes the host alpha/beta interferon antiviral response. Functionally, required cofactor for the serine protease function of NS3. May have membrane-destabilizing activity and form viroporins. Displays three enzymatic activities: serine protease, NTPase and RNA helicase. NS3 serine protease, in association with NS2B, performs its autocleavage and cleaves the polyprotein at dibasic sites in the cytoplasm: C-prM, NS2A-NS2B, NS2B-NS3, NS3-NS4A, NS4A-2K and NS4B-NS5. NS3 RNA helicase binds RNA and unwinds dsRNA in the 3' to 5' direction. NS3 supports the separation of RNA daughter and template strands during viral replication. The helicase part is involved in the inhibition of phosphorylation of host STAT1, and thereby inhibition of host type-I IFN signaling. In addition, NS3 assists the initiation of replication by unwinding the RNA secondary structure in the 3' non-translated region (NTR). Inhibits STAT2 translocation in the nucleus after IFN-alpha treatment. Its function is as follows. Regulates the ATPase activity of the NS3 helicase activity. NS4A allows NS3 helicase to conserve energy during unwinding. In terms of biological role, functions as a signal peptide for NS4B and is required for the interferon antagonism activity of the latter. Functionally, induces the formation of ER-derived membrane vesicles where the viral replication takes place. Inhibits interferon (IFN)-induced host STAT1 phosphorylation and nuclear translocation, thereby preventing the establishment of cellular antiviral state by blocking the IFN-alpha/beta pathway. Inhibits STAT2 translocation in the nucleus after IFN-alpha treatment. Replicates the viral (+) and (-) RNA genome, and performs the capping of genomes in the cytoplasm. NS5 methylates viral RNA cap at guanine N-7 and ribose 2'-O positions. Besides its role in RNA genome replication, also prevents the establishment of cellular antiviral state by blocking the interferon-alpha/beta (IFN-alpha/beta) signaling pathway. Inhibits host TYK2 and STAT2 phosphorylation, thereby preventing activation of JAK-STAT signaling pathway. The chain is Genome polyprotein from Aedes (Tropical bont tick).